The chain runs to 666 residues: Long chain acyl-CoA synthetase 4 (666 aa).

Residue 228 to 239 (IMYTSGTTGDPK) participates in ATP binding. The fatty acid-binding stretch occupies residues 495-519 (DGWLHTGDVGEWQPDGSMKIIDRKK).

The protein belongs to the ATP-dependent AMP-binding enzyme family. It depends on Mg(2+) as a cofactor.

The enzyme catalyses a long-chain fatty acid + ATP + CoA = a long-chain fatty acyl-CoA + AMP + diphosphate. It participates in lipid metabolism; fatty acid metabolism. Its function is as follows. Activation of long-chain fatty acids for both synthesis of cellular lipids, and degradation via beta-oxidation. Preferentially uses palmitate, palmitoleate, oleate and linoleate. This chain is Long chain acyl-CoA synthetase 4 (LACS4), found in Arabidopsis thaliana (Mouse-ear cress).